Consider the following 388-residue polypeptide: MTLLNPYFGEFGGMYVPQILMPALFELEKNFVSAQKDAEFQKKFFYLLQNYAGRPTPLTLCKNLTKGTKTKIYLKREDLLHGGAHKTNQVLGQAMLAIRMKKKEIIAETGAGQHGVASAIACALFNLKCRIYMGIKDIKRQNTNVFRMKLMGAEVISVKNGSGTLKDACNEALRDWSSSYKKSHYMIGTAAGPHPYPTIVREFQKMIGEETKKQILEKENKLPDSIIACIGGGSNAIGIFSDFINDKVNLIGVEPAGYGIHTGKHGAPLKHGRTGIYFGMKSHLMQNKQGQIQESWSISAGLDFPSVGPEHAWLNSINRAKYVSITDEEAISAFQVLSRKEGIIPALESSHALAYALKLMKKDPTIEQILIANLSVVEIKIFLQYMMF.

Lys86 is subject to N6-(pyridoxal phosphate)lysine.

The protein belongs to the TrpB family. As to quaternary structure, tetramer of two alpha and two beta chains. Requires pyridoxal 5'-phosphate as cofactor.

It carries out the reaction (1S,2R)-1-C-(indol-3-yl)glycerol 3-phosphate + L-serine = D-glyceraldehyde 3-phosphate + L-tryptophan + H2O. It functions in the pathway amino-acid biosynthesis; L-tryptophan biosynthesis; L-tryptophan from chorismate: step 5/5. In terms of biological role, the beta subunit is responsible for the synthesis of L-tryptophan from indole and L-serine. The sequence is that of Tryptophan synthase beta chain (trpB) from Buchnera aphidicola subsp. Acyrthosiphon pisum (strain APS) (Acyrthosiphon pisum symbiotic bacterium).